Reading from the N-terminus, the 317-residue chain is Tyrosine--tRNA ligase (317 aa).

An L-tyrosine-binding site is contributed by Tyr33. Residues Pro38–His46 carry the 'HIGH' region motif. Residues Tyr155, Gln159, Asp162, and Gln177 each contribute to the L-tyrosine site. The 'KMSKS' region signature appears at Lys211–Ser215. Position 214 (Ser214) interacts with ATP.

The protein belongs to the class-I aminoacyl-tRNA synthetase family. TyrS type 3 subfamily. Homodimer.

The protein localises to the cytoplasm. It catalyses the reaction tRNA(Tyr) + L-tyrosine + ATP = L-tyrosyl-tRNA(Tyr) + AMP + diphosphate + H(+). Catalyzes the attachment of tyrosine to tRNA(Tyr) in a two-step reaction: tyrosine is first activated by ATP to form Tyr-AMP and then transferred to the acceptor end of tRNA(Tyr). The protein is Tyrosine--tRNA ligase of Methanosarcina mazei (strain ATCC BAA-159 / DSM 3647 / Goe1 / Go1 / JCM 11833 / OCM 88) (Methanosarcina frisia).